A 75-amino-acid chain; its full sequence is Large ribosomal subunit protein bL28 (75 aa).

This sequence belongs to the bacterial ribosomal protein bL28 family.

The sequence is that of Large ribosomal subunit protein bL28 from Baumannia cicadellinicola subsp. Homalodisca coagulata.